The chain runs to 190 residues: Shikimate kinase (190 aa).

14–19 (GSGKST) serves as a coordination point for ATP. Position 18 (S18) interacts with Mg(2+). Residues D36, R60, and G82 each contribute to the substrate site. R120 is an ATP binding site. R147 contributes to the substrate binding site.

It belongs to the shikimate kinase family. As to quaternary structure, monomer. The cofactor is Mg(2+).

It is found in the cytoplasm. It carries out the reaction shikimate + ATP = 3-phosphoshikimate + ADP + H(+). Its pathway is metabolic intermediate biosynthesis; chorismate biosynthesis; chorismate from D-erythrose 4-phosphate and phosphoenolpyruvate: step 5/7. Its function is as follows. Catalyzes the specific phosphorylation of the 3-hydroxyl group of shikimic acid using ATP as a cosubstrate. This is Shikimate kinase from Chlorobium phaeobacteroides (strain DSM 266 / SMG 266 / 2430).